We begin with the raw amino-acid sequence, 217 residues long: Phosphatidylserine decarboxylase proenzyme (217 aa).

Ser-183 acts as the Schiff-base intermediate with substrate; via pyruvic acid in catalysis. Ser-183 carries the pyruvic acid (Ser); by autocatalysis modification.

The protein belongs to the phosphatidylserine decarboxylase family. PSD-A subfamily. Heterodimer of a large membrane-associated beta subunit and a small pyruvoyl-containing alpha subunit. The cofactor is pyruvate. In terms of processing, is synthesized initially as an inactive proenzyme. Formation of the active enzyme involves a self-maturation process in which the active site pyruvoyl group is generated from an internal serine residue via an autocatalytic post-translational modification. Two non-identical subunits are generated from the proenzyme in this reaction, and the pyruvate is formed at the N-terminus of the alpha chain, which is derived from the carboxyl end of the proenzyme. The post-translation cleavage follows an unusual pathway, termed non-hydrolytic serinolysis, in which the side chain hydroxyl group of the serine supplies its oxygen atom to form the C-terminus of the beta chain, while the remainder of the serine residue undergoes an oxidative deamination to produce ammonia and the pyruvoyl prosthetic group on the alpha chain.

It is found in the cell membrane. The enzyme catalyses a 1,2-diacyl-sn-glycero-3-phospho-L-serine + H(+) = a 1,2-diacyl-sn-glycero-3-phosphoethanolamine + CO2. It functions in the pathway phospholipid metabolism; phosphatidylethanolamine biosynthesis; phosphatidylethanolamine from CDP-diacylglycerol: step 2/2. In terms of biological role, catalyzes the formation of phosphatidylethanolamine (PtdEtn) from phosphatidylserine (PtdSer). This is Phosphatidylserine decarboxylase proenzyme from Cupriavidus pinatubonensis (strain JMP 134 / LMG 1197) (Cupriavidus necator (strain JMP 134)).